Here is a 177-residue protein sequence, read N- to C-terminus: FMRFamide-related peptides (177 aa).

Residues 1–21 (MNHPRSIAMLAALWLVVSVTS) form the signal peptide. Positions 22 to 32 (TPVRRSPDLEA) are excised as a propeptide. Phenylalanine amide is present on F45. Residues 47 to 93 (RSTLPVVPPAQPSFLQRYSAPQPAALTADDLMTFLRAYEEDYSSPVS) constitute a propeptide that is removed on maturation. Residues F102 and F111 each carry the phenylalanine amide modification. Positions 113 to 131 (RSVDEENSGYQAETNTYPQ) are excised as a propeptide. L143 is subject to Leucine amide. Positions 145-177 (RDNELSESNDEDRYEVESERTKRSVVDPCNDCA) are excised as a propeptide. The tract at residues 145–177 (RDNELSESNDEDRYEVESERTKRSVVDPCNDCA) is disordered. Residues 149–158 (LSESNDEDRY) are compositionally biased toward acidic residues. Residues 159–169 (EVESERTKRSV) are compositionally biased toward basic and acidic residues.

It belongs to the FARP (FMRFamide related peptide) family. Only expressed in the CNS and predominantly in the thoracic ganglia. Strongest expression is seen in two pairs of large neurons in each thoracic ganglion. These neurons are ventrolateral neurosecretory cells 1 and 2, they project their axons through transverse nerves into the periphery where axons from the prothoracic ganglion innervate the prothoracic gland.

The protein resides in the secreted. Regulates ecdysteroidogenesis by direct innervation of the prothoracic gland by reducing cAMP production via the receptor for myosuppressin. The neurons that innervate the prothoracic gland during the fifth instar are most active during days 0-4, after which they reduce and then peak again on day 6. Expression suppresses the biosynthesis of steroid hormones called ecdysteroids that elicit molting and metamorphosis. The protein is FMRFamide-related peptides of Bombyx mori (Silk moth).